A 202-amino-acid polypeptide reads, in one-letter code: MGRGEFLAMKTEENAANLINSDMNEFVAAAKKLVKDVGMLGGVGFGTSVLQWAASIFAIYLLILDRTNWKTKMLTTLLVPYIFFTLPSVIFQFFSGDFGKWIALIAIIVRLFFPKEFPEWLEIPVALILIVVVSPSLIAWTLRESWVGAVICLVIACYLFHEHIKASGGFKNSFTQKNGISNTIGIVALLVYPVWTIFFHIF.

The Extracellular segment spans residues 1–42; that stretch reads MGRGEFLAMKTEENAANLINSDMNEFVAAAKKLVKDVGMLGG. A helical membrane pass occupies residues 43–63; that stretch reads VGFGTSVLQWAASIFAIYLLI. The Cytoplasmic portion of the chain corresponds to 64–72; it reads LDRTNWKTK. A helical membrane pass occupies residues 73 to 93; that stretch reads MLTTLLVPYIFFTLPSVIFQF. At 94-97 the chain is on the extracellular side; the sequence is FSGD. A helical membrane pass occupies residues 98 to 118; it reads FGKWIALIAIIVRLFFPKEFP. A topological domain (cytoplasmic) is located at residue E119. A helical transmembrane segment spans residues 120-140; it reads WLEIPVALILIVVVSPSLIAW. Residues 141-145 are Extracellular-facing; sequence TLRES. Residues 146-166 traverse the membrane as a helical segment; it reads WVGAVICLVIACYLFHEHIKA. Over 167 to 181 the chain is Cytoplasmic; it reads SGGFKNSFTQKNGIS. Residues 182–202 form a helical membrane-spanning segment; that stretch reads NTIGIVALLVYPVWTIFFHIF.

It belongs to the Cold-regulated 413 protein family.

It localises to the cell membrane. This chain is Cold-regulated 413 plasma membrane protein 4, found in Arabidopsis thaliana (Mouse-ear cress).